The sequence spans 157 residues: Transcriptional repressor NrdR (157 aa).

The segment at 3 to 34 is a zinc-finger region; it reads CPFCGHEDTQVKDSRPTDDGTAIRRRRSCTAC. An ATP-cone domain is found at 49–139; sequence LIVVKTDQRR…VYRNFSDAGD (91 aa).

The protein belongs to the NrdR family. Zn(2+) is required as a cofactor.

Its function is as follows. Negatively regulates transcription of bacterial ribonucleotide reductase nrd genes and operons by binding to NrdR-boxes. This Granulibacter bethesdensis (strain ATCC BAA-1260 / CGDNIH1) protein is Transcriptional repressor NrdR.